A 149-amino-acid polypeptide reads, in one-letter code: Large ribosomal subunit protein bL9 (149 aa).

It belongs to the bacterial ribosomal protein bL9 family.

Binds to the 23S rRNA. This is Large ribosomal subunit protein bL9 from Leptospira interrogans serogroup Icterohaemorrhagiae serovar copenhageni (strain Fiocruz L1-130).